A 124-amino-acid polypeptide reads, in one-letter code: MLTIVAIALFGALGCLARYLLAGWVYAFVGRGFPYGTLTVNVVGAFLIGLIMEFSLRTTLIPQELRIGLTIGFLGGLTTFSTFSYETFRLLEDGEFITAAVNVLASVLVCLACTWLGIMTARHL.

A run of 4 helical transmembrane segments spans residues 4 to 24, 32 to 52, 67 to 87, and 96 to 116; these read IVAIALFGALGCLARYLLAGW, GFPYGTLTVNVVGAFLIGLIM, IGLTIGFLGGLTTFSTFSYET, and FITAAVNVLASVLVCLACTWL. Na(+) is bound by residues glycine 75 and threonine 78.

This sequence belongs to the fluoride channel Fluc/FEX (TC 1.A.43) family.

Its subcellular location is the cell inner membrane. The enzyme catalyses fluoride(in) = fluoride(out). Na(+) is not transported, but it plays an essential structural role and its presence is essential for fluoride channel function. In terms of biological role, fluoride-specific ion channel. Important for reducing fluoride concentration in the cell, thus reducing its toxicity. The protein is Fluoride-specific ion channel FluC of Geobacter metallireducens (strain ATCC 53774 / DSM 7210 / GS-15).